Here is a 932-residue protein sequence, read N- to C-terminus: MAAPQSRPRRGELILLCALLGTLWEIGRGQIRYSVPEETDKGSFVGNISKDLGLDPRELAKHGVRIVSRGRTQLFALNPRSGSLVTAGRIDREELCAQSPRCLININILVEDKGKLFGIEIEIVDINDNNPKFQVEDLEVKINEIAVPGARYPLPEAVDPDVGVNSLQSYQLSPNHHFSLDVQTGDNGAINPELVLERALDREEEAAHHLVLTASDGGEPRRSSTVRIHVTVLDTNDNAPVFPHPIYRVKVLENMPPGTRLLTVTASDPDEGINGKVAYKFRKINEKQTPLFQLNENTGEISIAKSLDYEECSFYEMEIQAEDVGALLGRTKLLISVEDVNDNRPEVIITSLFSPVLENSLPGTVIAFLSVHDQDSGKNGQVVCHTRDNLPFKLEKSIDNYYRLVTRKYLDRENVSIYNITVMASDLGTPPLSTETQIALHVADINDNPPTFPHASYSAYILENNLRGASIFSLTAHDPDSQENAQVTYSVTEDTLQGAPLSSYISINSDTGVLYALQSFDYEQIRDLQLLVTASDSGDPPLSSNVSLSLFVLDQNDNAPEILYPTLPTDGSTGLELAPRSAEPGYLVTKVVAVDRDSGQNAWLSYRLLKASEPGLFSVGLHTGEVRTARALLDRDALKQSLVVAVQDHGQPPLSATVTLTVAVADSIPEVLTELGSLKPSVDPNDSSLTLYLVVAVAAISCVFLAFVAVLLGLRLRRWHKSHLLQDSSGRLVGVPASHFVGVEEVQAFLQTYSQEVSLTADSRKSHLIFPQPNYADTLISQESCEKNDSLLTSVDFHEYKNEADHGQQAPPNTDWRFSQAQRPGTSGSQNGDDTGTWPNNQFDTEMLQAMILASASEAADGSSTLGGGAGTMGLSARYGPQFTLQHVPDYRQNVYIPGSNATLTNAAGKRDGKAPAGGNGNKKKSGKKEKK.

The signal sequence occupies residues 1-29 (MAAPQSRPRRGELILLCALLGTLWEIGRG). Cadherin domains are found at residues 30–133 (QIRY…NPKF), 134–242 (QVED…APVF), 243–347 (PHPI…RPEV), 348–452 (IITS…PPTF), 453–562 (PHAS…APEI), and 570–682 (DGST…KPSV). Residues 30–692 (QIRYSVPEET…DPNDSSLTLY (663 aa)) lie on the Extracellular side of the membrane. Asn47 is a glycosylation site (N-linked (GlcNAc...) asparagine). N-linked (GlcNAc...) asparagine glycans are attached at residues Asn414, Asn419, and Asn545. N-linked (GlcNAc...) asparagine glycosylation occurs at Asn685. A helical transmembrane segment spans residues 693–713 (LVVAVAAISCVFLAFVAVLLG). Residues 714 to 932 (LRLRRWHKSH…KKKSGKKEKK (219 aa)) lie on the Cytoplasmic side of the membrane. Disordered stretches follow at residues 804–841 (ADHG…WPNN) and 902–932 (ATLT…KEKK). The span at 810–841 (APPNTDWRFSQAQRPGTSGSQNGDDTGTWPNN) shows a compositional bias: polar residues. Residues 922–932 (NKKKSGKKEKK) are compositionally biased toward basic residues.

Its subcellular location is the cell membrane. Functionally, potential calcium-dependent cell-adhesion protein. May be involved in the establishment and maintenance of specific neuronal connections in the brain. This Pan troglodytes (Chimpanzee) protein is Protocadherin gamma-A8 (PCDHGA8).